The sequence spans 274 residues: Penicillin-insensitive murein endopeptidase (274 aa).

Residues 1–19 form the signal peptide; sequence MNKTAIALLALLASSASLA. 3 disulfide bridges follow: C44/C265, C187/C235, and C216/C223. Residues H110, H113, D120, D147, H150, and H211 each coordinate Zn(2+). The interval 228 to 264 is disordered; it reads LPPPGDGCGAELQSWFAPPKPGTTKPEKKTPSPLPPS.

It belongs to the peptidase M74 family. As to quaternary structure, dimer. Requires Zn(2+) as cofactor.

The protein resides in the periplasm. Functionally, murein endopeptidase that cleaves the D-alanyl-meso-2,6-diamino-pimelyl amide bond that connects peptidoglycan strands. Likely plays a role in the removal of murein from the sacculus. The sequence is that of Penicillin-insensitive murein endopeptidase from Escherichia coli (strain 55989 / EAEC).